We begin with the raw amino-acid sequence, 440 residues long: L-gulonolactone oxidase (440 aa).

Residues 17–187 form the FAD-binding PCMH-type domain; the sequence is YGCSPEMYYQ…LTVTLQCVPQ (171 aa). His-54 is subject to Pros-8alpha-FAD histidine. The helical transmembrane segment at 251-273 threads the bilayer; sequence IGFYLLEFLLWTSTYLPRLVGWI.

It belongs to the oxygen-dependent FAD-linked oxidoreductase family. The cofactor is FAD. In terms of tissue distribution, highly expressed in liver.

Its subcellular location is the microsome membrane. It localises to the endoplasmic reticulum membrane. It catalyses the reaction L-gulono-1,4-lactone + O2 = L-ascorbate + H2O2 + H(+). The protein operates within cofactor biosynthesis; L-ascorbate biosynthesis via UDP-alpha-D-glucuronate pathway; L-ascorbate from UDP-alpha-D-glucuronate: step 4/4. In terms of biological role, oxidizes L-gulono-1,4-lactone to hydrogen peroxide and L-xylo-hexulonolactone which spontaneously isomerizes to L-ascorbate. This is L-gulonolactone oxidase (Gulo) from Mus musculus (Mouse).